The sequence spans 348 residues: Dihydroorotase (348 aa).

Zn(2+)-binding residues include histidine 13 and histidine 15. Residues 15-17 (HLR) and asparagine 41 each bind substrate. Zn(2+)-binding residues include lysine 99, histidine 136, and histidine 174. Lysine 99 is modified (N6-carboxylysine). Substrate is bound at residue histidine 136. Residue leucine 219 participates in substrate binding. Residue aspartate 247 participates in Zn(2+) binding. Residue aspartate 247 is part of the active site. Histidine 251 and alanine 263 together coordinate substrate.

The protein belongs to the metallo-dependent hydrolases superfamily. DHOase family. Class II DHOase subfamily. In terms of assembly, homodimer. Requires Zn(2+) as cofactor.

The catalysed reaction is (S)-dihydroorotate + H2O = N-carbamoyl-L-aspartate + H(+). It functions in the pathway pyrimidine metabolism; UMP biosynthesis via de novo pathway; (S)-dihydroorotate from bicarbonate: step 3/3. Catalyzes the reversible cyclization of carbamoyl aspartate to dihydroorotate. The sequence is that of Dihydroorotase from Coxiella burnetii (strain RSA 331 / Henzerling II).